Here is a 604-residue protein sequence, read N- to C-terminus: Glucose oxidase 2 (604 aa).

A signal peptide spans 1 to 16 (MKLLGLLSGLVVVATA). Leu49 and Thr50 together coordinate FAD. A glycan (N-linked (GlcNAc...) asparagine) is linked at Asn63. Position 70 (Glu70) interacts with FAD. Residue Asn109 is glycosylated (N-linked (GlcNAc...) asparagine). FAD contacts are provided by Ser123, Asn127, Gly128, and Ser130. The cysteines at positions 184 and 226 are disulfide-linked. Asn214 is a glycosylation site (N-linked (GlcNAc...) asparagine). Val270 is a binding site for FAD. Residues Asn375, Asn408, and Asn517 are each glycosylated (N-linked (GlcNAc...) asparagine). Catalysis depends on His536, which acts as the Proton acceptor. Residues Arg557 and Val558 each coordinate O2. The FAD site is built by Gly569 and Met581. N-linked (GlcNAc...) asparagine glycosylation is present at Asn600.

This sequence belongs to the GMC oxidoreductase family. Homodimer. The cofactor is FAD.

It is found in the secreted. The protein resides in the cell wall. The protein localises to the cytoplasm. Its subcellular location is the extracellular space. It localises to the extracellular matrix. It carries out the reaction beta-D-glucose + O2 = D-glucono-1,5-lactone + H2O2. Functionally, glucose oxidase catalyzes the oxidation of beta-D-glucose to D-glucono-delta-lactone and hydrogen peroxide in the presence of molecular oxygen. D-glucono-delta-lactone is sequentially hydrolyzed by lactonase to D-gluconic acid, and the resulting hydrogen peroxide is hydrolyzed by catalase to oxygen and water. Acts as a key factor contributing to fungal disease of apple. The production of gluconic acid leads to host tissue acidification that enhances the expression of pectolytic enzymes and the establishment of conditions for necrotrophic development of P.expansum. This chain is Glucose oxidase 2, found in Penicillium expansum (Blue mold rot fungus).